Here is a 41-residue protein sequence, read N- to C-terminus: Histone H3.2 (41 aa).

The interval 1–41 is disordered; the sequence is MARAKQTARKSTGAEAPRKQLASKAARKSAPATGGIKKPHR.

The protein belongs to the histone H3 family. The nucleosome is a histone octamer containing two molecules each of H2A, H2B, H3 and H4 assembled in one H3-H4 heterotetramer and two H2A-H2B heterodimers. The octamer wraps approximately 147 bp of DNA.

It localises to the nucleus. The protein localises to the chromosome. Functionally, core component of nucleosome. Nucleosomes wrap and compact DNA into chromatin, limiting DNA accessibility to the cellular machineries which require DNA as a template. Histones thereby play a central role in transcription regulation, DNA repair, DNA replication and chromosomal stability. DNA accessibility is regulated via a complex set of post-translational modifications of histones, also called histone code, and nucleosome remodeling. The protein is Histone H3.2 of Tetrahymena borealis.